We begin with the raw amino-acid sequence, 104 residues long: MMLSVFKKKSCSYDVTIFQTPRFGEKKGYRAVYRTELNGSDHQDVLKRAFSLFNVFDTVPSDYDARFMATGDVILIDEGRKGKTYYQLLPAGWRKINRLIVQTT.

This is an uncharacterized protein from Bacillus subtilis (strain 168).